A 287-amino-acid chain; its full sequence is 3-methyl-2-oxobutanoate hydroxymethyltransferase (287 aa).

Residues D67 and D106 each coordinate Mg(2+). 3-methyl-2-oxobutanoate is bound by residues 67–68 (DS), D106, and K136. Mg(2+) is bound at residue E138. E204 acts as the Proton acceptor in catalysis.

The protein belongs to the PanB family. In terms of assembly, homodecamer; pentamer of dimers. Mg(2+) serves as cofactor.

It localises to the cytoplasm. It catalyses the reaction 3-methyl-2-oxobutanoate + (6R)-5,10-methylene-5,6,7,8-tetrahydrofolate + H2O = 2-dehydropantoate + (6S)-5,6,7,8-tetrahydrofolate. The protein operates within cofactor biosynthesis; (R)-pantothenate biosynthesis; (R)-pantoate from 3-methyl-2-oxobutanoate: step 1/2. Functionally, catalyzes the reversible reaction in which hydroxymethyl group from 5,10-methylenetetrahydrofolate is transferred onto alpha-ketoisovalerate to form ketopantoate. The sequence is that of 3-methyl-2-oxobutanoate hydroxymethyltransferase from Streptomyces avermitilis (strain ATCC 31267 / DSM 46492 / JCM 5070 / NBRC 14893 / NCIMB 12804 / NRRL 8165 / MA-4680).